We begin with the raw amino-acid sequence, 171 residues long: Orange carotenoid-binding domain-containing protein (171 aa).

One can recognise an OCP N-terminal domain in the interval 21-171 (GDAVASTITV…ADMGVDPLAD (151 aa)).

The protein belongs to the orange carotenoid-binding protein family. It depends on 3'-hydroxyechinenone as a cofactor.

It localises to the cellular thylakoid membrane. Functionally, might act as a photo-protectant, protecting against damage induced by excess light via a process known as non-photochemical quenching (NPQ). This Nostoc sp. (strain PCC 7120 / SAG 25.82 / UTEX 2576) protein is Orange carotenoid-binding domain-containing protein.